Here is a 104-residue protein sequence, read N- to C-terminus: Large ribosomal subunit protein uL24 (104 aa).

This sequence belongs to the universal ribosomal protein uL24 family. In terms of assembly, part of the 50S ribosomal subunit.

One of two assembly initiator proteins, it binds directly to the 5'-end of the 23S rRNA, where it nucleates assembly of the 50S subunit. Functionally, one of the proteins that surrounds the polypeptide exit tunnel on the outside of the subunit. This is Large ribosomal subunit protein uL24 from Pseudomonas fluorescens (strain SBW25).